Consider the following 196-residue polypeptide: Peroxiredoxin TSA2 (196 aa).

The Thioredoxin domain maps to alanine 3–tryptophan 161. Residue lysine 14 forms a Glycyl lysine isopeptide (Lys-Gly) (interchain with G-Cter in ubiquitin) linkage. The Cysteine sulfenic acid (-SOH) intermediate role is filled by cysteine 48. Residues lysine 89 and lysine 132 each participate in a glycyl lysine isopeptide (Lys-Gly) (interchain with G-Cter in ubiquitin) cross-link. At threonine 174 the chain carries Phosphothreonine.

It belongs to the peroxiredoxin family. AhpC/Prx1 subfamily. As to quaternary structure, homodimer; disulfide-linked, upon oxidation.

The protein resides in the cytoplasm. The enzyme catalyses a hydroperoxide + [thioredoxin]-dithiol = an alcohol + [thioredoxin]-disulfide + H2O. Its function is as follows. Thiol-specific peroxidase that catalyzes the reduction of hydrogen peroxide and organic hydroperoxides to water and alcohols, respectively. Plays a role in cell protection against oxidative stress by detoxifying peroxides and as sensor of hydrogen peroxide-mediated signaling events. Can act alternatively as peroxidase and molecular chaperone. Oxidative stress and heat shock exposure cause a reversible shift of the protein structure from low MW species to high MW complexes, triggering a peroxidase-to-chaperone functional switch. The chaperone function of the protein enhances resistance to heat shock. This Saccharomyces cerevisiae (strain ATCC 204508 / S288c) (Baker's yeast) protein is Peroxiredoxin TSA2.